The following is a 660-amino-acid chain: Poly(A)-specific ribonuclease PARN (660 aa).

Positions 28 and 30 each coordinate a divalent metal cation. An R3H domain is found at 177 to 243 (REFIRSVEEK…ERFIQISKVD (67 aa)). A divalent metal cation-binding residues include D290 and D380. 2 positions are modified to phosphoserine: S560 and S614. The tract at residues 606–660 (ADEGGASVSPVAEEAELDEFSANQSQGKRSRKHKKRKSDASETTPPALFDVPQVW) is disordered. The segment covering 633–642 (KRSRKHKKRK) has biased composition (basic residues). S643 bears the Phosphoserine mark. T649 bears the Phosphothreonine mark.

Belongs to the CAF1 family. A divalent metal cation serves as cofactor.

The protein resides in the cytoplasm. The protein localises to the nucleus. It catalyses the reaction Exonucleolytic cleavage of poly(A) to 5'-AMP.. In terms of biological role, 3'-exoribonuclease that has a preference for poly(A) tails of mRNAs, thereby efficiently degrading poly(A) tails. Exonucleolytic degradation of the poly(A) tail is often the first step in the decay of eukaryotic mRNAs and is also used to silence certain maternal mRNAs translationally during oocyte maturation and early embryonic development. The sequence is that of Poly(A)-specific ribonuclease PARN (parn) from Danio rerio (Zebrafish).